The sequence spans 191 residues: dCTP deaminase (191 aa).

DCTP contacts are provided by residues 112–117, 136–138, Q157, Y173, and Q183; these read KSTYAR and TLE. E138 functions as the Proton donor/acceptor in the catalytic mechanism.

This sequence belongs to the dCTP deaminase family. As to quaternary structure, homotrimer.

It carries out the reaction dCTP + H2O + H(+) = dUTP + NH4(+). It functions in the pathway pyrimidine metabolism; dUMP biosynthesis; dUMP from dCTP (dUTP route): step 1/2. In terms of biological role, catalyzes the deamination of dCTP to dUTP. The chain is dCTP deaminase from Psychrobacter arcticus (strain DSM 17307 / VKM B-2377 / 273-4).